The chain runs to 251 residues: Hydroxyacylglutathione hydrolase (251 aa).

Residues H53, H55, D57, H58, H110, D127, and H165 each contribute to the Zn(2+) site.

The protein belongs to the metallo-beta-lactamase superfamily. Glyoxalase II family. Monomer. Zn(2+) serves as cofactor.

It carries out the reaction an S-(2-hydroxyacyl)glutathione + H2O = a 2-hydroxy carboxylate + glutathione + H(+). It participates in secondary metabolite metabolism; methylglyoxal degradation; (R)-lactate from methylglyoxal: step 2/2. Its function is as follows. Thiolesterase that catalyzes the hydrolysis of S-D-lactoyl-glutathione to form glutathione and D-lactic acid. This Escherichia coli (strain SE11) protein is Hydroxyacylglutathione hydrolase.